Here is an 81-residue protein sequence, read N- to C-terminus: Photosystem I iron-sulfur center (81 aa).

4Fe-4S ferredoxin-type domains follow at residues 2 to 31 (AHSV…MVPW) and 39 to 68 (IASA…VRVY). Positions 11, 14, 17, 21, 48, 51, 54, and 58 each coordinate [4Fe-4S] cluster.

The eukaryotic PSI reaction center is composed of at least 11 subunits. The cofactor is [4Fe-4S] cluster.

It localises to the plastid. Its subcellular location is the chloroplast thylakoid membrane. The catalysed reaction is reduced [plastocyanin] + hnu + oxidized [2Fe-2S]-[ferredoxin] = oxidized [plastocyanin] + reduced [2Fe-2S]-[ferredoxin]. Functionally, apoprotein for the two 4Fe-4S centers FA and FB of photosystem I (PSI); essential for photochemical activity. FB is the terminal electron acceptor of PSI, donating electrons to ferredoxin. The C-terminus interacts with PsaA/B/D and helps assemble the protein into the PSI complex. Required for binding of PsaD and PsaE to PSI. PSI is a plastocyanin-ferredoxin oxidoreductase, converting photonic excitation into a charge separation, which transfers an electron from the donor P700 chlorophyll pair to the spectroscopically characterized acceptors A0, A1, FX, FA and FB in turn. The chain is Photosystem I iron-sulfur center from Physcomitrium patens (Spreading-leaved earth moss).